The following is a 97-amino-acid chain: Protein CYSTEINE-RICH TRANSMEMBRANE MODULE 7 (97 aa).

Residues 1 to 27 (MASYHVSHDSYQSPGPSPLYQPIIEAP) are disordered. A compositionally biased stretch (pro residues) spans 15–27 (GPSPLYQPIIEAP). The helical transmembrane segment at 68-88 (YVGCFPFLRSCLTTLCCCWFV) threads the bilayer.

Belongs to the CYSTM1 family. Homodimer and heterodimers. Interacts with CYSTM3, CYSTM4, CYSTM5, CYSTM6, CYSTM10, WIH1/CYSTM13 and CYSTM11. Binds weakly to CYSTM1, CYSTM2 and CYSTM12. Mostly expressed in siliques and, to a lower extent, in stems, roots, leaves and flowers.

Its subcellular location is the cell membrane. Involved in resistance to abiotic stress. This Arabidopsis thaliana (Mouse-ear cress) protein is Protein CYSTEINE-RICH TRANSMEMBRANE MODULE 7.